Reading from the N-terminus, the 132-residue chain is uncharacterized protein (132 aa).

This sequence to M.jannaschii MJ0661.

This is an uncharacterized protein from Helicobacter pylori (strain ATCC 700392 / 26695) (Campylobacter pylori).